Reading from the N-terminus, the 336-residue chain is Biotin synthase (336 aa).

The 234-residue stretch at 55–288 (GEAASLHACS…RTIIKFAAGR (234 aa)) folds into the Radical SAM core domain. [4Fe-4S] cluster-binding residues include C73, C77, and C80. The [2Fe-2S] cluster site is built by C152, C213, and K283.

This sequence belongs to the radical SAM superfamily. Biotin synthase family. In terms of assembly, homodimer. Requires [4Fe-4S] cluster as cofactor. [2Fe-2S] cluster is required as a cofactor.

The enzyme catalyses (4R,5S)-dethiobiotin + (sulfur carrier)-SH + 2 reduced [2Fe-2S]-[ferredoxin] + 2 S-adenosyl-L-methionine = (sulfur carrier)-H + biotin + 2 5'-deoxyadenosine + 2 L-methionine + 2 oxidized [2Fe-2S]-[ferredoxin]. It functions in the pathway cofactor biosynthesis; biotin biosynthesis; biotin from 7,8-diaminononanoate: step 2/2. Functionally, catalyzes the conversion of dethiobiotin (DTB) to biotin by the insertion of a sulfur atom into dethiobiotin via a radical-based mechanism. This chain is Biotin synthase, found in Chlorobium limicola (strain DSM 245 / NBRC 103803 / 6330).